The chain runs to 66 residues: Large ribosomal subunit protein uL29 (66 aa).

The protein belongs to the universal ribosomal protein uL29 family.

The protein is Large ribosomal subunit protein uL29 of Bacillus anthracis (strain CDC 684 / NRRL 3495).